A 202-amino-acid chain; its full sequence is Nascent polypeptide-associated complex subunit alpha (202 aa).

A compositionally biased stretch (basic and acidic residues) spans 1–19 (MADPRVEELPDEEVPKTNV). The disordered stretch occupies residues 1 to 44 (MADPRVEELPDEEVPKTNVEDAGSDSESEAGEEPTIPGGAAVAV). Acidic residues predominate over residues 22–32 (AGSDSESEAGE). The region spanning 46 to 111 (SRNEKKARKA…AKIEDLNAQA (66 aa)) is the NAC-A/B domain. The tract at residues 118 to 165 (QLAAQEAAQEHAGHEHEDILGKAKEPEAEKKEAEEDDGEEVDESGLEA) is disordered. A compositionally biased stretch (basic and acidic residues) spans 125-150 (AQEHAGHEHEDILGKAKEPEAEKKEA). The span at 151–162 (EEDDGEEVDESG) shows a compositional bias: acidic residues. The UBA domain occupies 163–202 (LEAKDIELVMAQANVSRKKAVKALRENDNDIVNSIMALSI).

The protein belongs to the NAC-alpha family. Part of the nascent polypeptide-associated complex (NAC), consisting of egd2 and egd1. NAC associates with ribosomes via egd1.

The protein resides in the cytoplasm. It localises to the nucleus. Component of the nascent polypeptide-associated complex (NAC), a dynamic component of the ribosomal exit tunnel, protecting the emerging polypeptides from interaction with other cytoplasmic proteins to ensure appropriate nascent protein targeting. The NAC complex also promotes mitochondrial protein import by enhancing productive ribosome interactions with the outer mitochondrial membrane and blocks the inappropriate interaction of ribosomes translating non-secretory nascent polypeptides with translocation sites in the membrane of the endoplasmic reticulum. Egd2 may also be involved in transcription regulation. This Aspergillus terreus (strain NIH 2624 / FGSC A1156) protein is Nascent polypeptide-associated complex subunit alpha (egd2).